The chain runs to 353 residues: Photosystem II protein D1 (353 aa).

At T2 the chain carries N-acetylthreonine. Phosphothreonine is present on T2. Transmembrane regions (helical) follow at residues 29-46, 118-133, and 142-156; these read YIGWFGVLMIPTLLTATS, HFLLGVACYMGREWEL, and WIAVAYSAPVAAAAA. H118 provides a ligand contact to chlorophyll a. Y126 serves as a coordination point for pheophytin a. 2 residues coordinate [CaMn4O5] cluster: D170 and E189. The chain crosses the membrane as a helical span at residues 197–218; that stretch reads FHMLGVAGVFGGSLFSAMHGSL. Residue H198 participates in chlorophyll a binding. A quinone-binding positions include H215 and 264–265; that span reads SF. A Fe cation-binding site is contributed by H215. Residue H272 coordinates Fe cation. A helical membrane pass occupies residues 274-288; sequence FLAAWPVVGIWFTAL. Positions 332, 333, 342, and 344 each coordinate [CaMn4O5] cluster. Positions 345-353 are excised as a propeptide; the sequence is AVEAPSTNG.

This sequence belongs to the reaction center PufL/M/PsbA/D family. PSII is composed of 1 copy each of membrane proteins PsbA, PsbB, PsbC, PsbD, PsbE, PsbF, PsbH, PsbI, PsbJ, PsbK, PsbL, PsbM, PsbT, PsbX, PsbY, PsbZ, Psb30/Ycf12, at least 3 peripheral proteins of the oxygen-evolving complex and a large number of cofactors. It forms dimeric complexes. The D1/D2 heterodimer binds P680, chlorophylls that are the primary electron donor of PSII, and subsequent electron acceptors. It shares a non-heme iron and each subunit binds pheophytin, quinone, additional chlorophylls, carotenoids and lipids. D1 provides most of the ligands for the Mn4-Ca-O5 cluster of the oxygen-evolving complex (OEC). There is also a Cl(-1) ion associated with D1 and D2, which is required for oxygen evolution. The PSII complex binds additional chlorophylls, carotenoids and specific lipids. serves as cofactor. Tyr-161 forms a radical intermediate that is referred to as redox-active TyrZ, YZ or Y-Z. Post-translationally, C-terminally processed by CTPA; processing is essential to allow assembly of the oxygen-evolving complex and thus photosynthetic growth.

Its subcellular location is the plastid. The protein localises to the chloroplast thylakoid membrane. The enzyme catalyses 2 a plastoquinone + 4 hnu + 2 H2O = 2 a plastoquinol + O2. In terms of biological role, photosystem II (PSII) is a light-driven water:plastoquinone oxidoreductase that uses light energy to abstract electrons from H(2)O, generating O(2) and a proton gradient subsequently used for ATP formation. It consists of a core antenna complex that captures photons, and an electron transfer chain that converts photonic excitation into a charge separation. The D1/D2 (PsbA/PsbD) reaction center heterodimer binds P680, the primary electron donor of PSII as well as several subsequent electron acceptors. This chain is Photosystem II protein D1, found in Panax ginseng (Korean ginseng).